The primary structure comprises 245 residues: AP-1-like transcription factor YAP5 (245 aa).

Basic residues predominate over residues 34–47 (LPHRAAQRRKRVHR). Residues 34–77 (LPHRAAQRRKRVHRLHEDYETEENDEELQKKKRQNRDAQRAYRE) are disordered. In terms of domain architecture, bZIP spans 58 to 121 (DEELQKKKRQ…QAKESENHAL (64 aa)). A basic motif region spans residues 63 to 82 (KKKRQNRDAQRAYRERKNNK). Positions 68 to 77 (NRDAQRAYRE) are enriched in basic and acidic residues. The tract at residues 86–114 (LEETIESLSKVVKNYETKLNRLQNELQAK) is leucine-zipper.

Belongs to the bZIP family. YAP subfamily. In terms of assembly, homodimer.

Its subcellular location is the cytoplasm. The protein localises to the nucleus. Functionally, transcription activator involved in the regulation of genes expressed in response to environmental changes and metabolic requirements. According to genome-wide promoter binding and gene expression studies it is a coregulator for the expression of ribosomal genes, while its own expression is induced by the cell cycle specific activator SBF (SWI4-SWI6). This Saccharomyces cerevisiae (strain ATCC 204508 / S288c) (Baker's yeast) protein is AP-1-like transcription factor YAP5 (YAP5).